The chain runs to 370 residues: N-acyl-L-amino acid amidohydrolase (370 aa).

Belongs to the peptidase M20 family. Homotetramer. The cofactor is Co(2+).

The enzyme catalyses an N-acyl-L-amino acid + H2O = an L-alpha-amino acid + a carboxylate. The catalysed reaction is an N-acetyl-L-cysteine-S-conjugate + H2O = an S-substituted L-cysteine + acetate. Hydrolyzes most efficiently N-acetyl derivatives of aromatic amino acids but is also active on other amino acids. L-stereospecific. The sequence is that of N-acyl-L-amino acid amidohydrolase (amaA) from Geobacillus stearothermophilus (Bacillus stearothermophilus).